Reading from the N-terminus, the 234-residue chain is tRNA (guanine-N(1)-)-methyltransferase (234 aa).

Glycine 113 contacts S-adenosyl-L-methionine.

Belongs to the RNA methyltransferase TrmD family. As to quaternary structure, homodimer.

It is found in the cytoplasm. The catalysed reaction is guanosine(37) in tRNA + S-adenosyl-L-methionine = N(1)-methylguanosine(37) in tRNA + S-adenosyl-L-homocysteine + H(+). In terms of biological role, specifically methylates guanosine-37 in various tRNAs. The sequence is that of tRNA (guanine-N(1)-)-methyltransferase from Gluconobacter oxydans (strain 621H) (Gluconobacter suboxydans).